Here is a 401-residue protein sequence, read N- to C-terminus: Probable trafficking protein particle complex subunit 13 homolog (401 aa).

Belongs to the TRAPPC13 family.

The chain is Probable trafficking protein particle complex subunit 13 homolog from Caenorhabditis briggsae.